The chain runs to 103 residues: ASRSQAEDVRVEGAFPVTMLPGDGVGPELMAAVGVIECLKLGDGLFLQCCEEVAELYPKNIANPTATLLASCMMLDHLKTSDMGGYATCQDFTEAVIGALSHP.

It belongs to the isocitrate and isopropylmalate dehydrogenases family. As to quaternary structure, heterooligomer of subunits alpha (IDH3A), beta (IDH3B), and gamma (IDH3G) in the apparent ratio of 2:1:1. The heterodimer containing one IDH3A and one IDH3B subunit and the heterodimer containing one IDH3A and one IDH3G subunit assemble into a heterotetramer (which contains two subunits of IDH3A, one of IDH3B and one of IDH3G) and further into the heterooctamer.

It localises to the mitochondrion. Its activity is regulated as follows. The heterotetramer and the heterodimer composed of IDH3A and IDH3G subunits can be allosterically activated by citrate (CIT) or/and ADP, and the two activators can act independently or synergistically. The heterodimer composed of IDH3A and IDH3B subunits cannot be allosterically regulated and the allosteric regulation of the heterotetramer is through the IDH3G subunit and not the IDH3B subunit. The IDH3G subunit contains the allosteric site which consists of a CIT-binding site and an ADP-binding site, and the binding of CIT and ADP causes conformational changes at the allosteric site which are transmitted to the active site in the catalytic subunit (IDH3A) through a cascade of conformational changes at the heterodimer interface, leading to stabilization of the isocitrate-binding at the active site and thus activation of the enzyme. ATP can activate the heterotetramer and the heterodimer composed of IDH3A and IDH3G subunits at low concentrations but inhibits their activities at high concentrations, whereas ATP exhibits only inhibitory effect on the heterodimer composed of IDH3A and IDH3B subunits. Its function is as follows. Plays a structural role to facilitate the assembly and ensure the full activity of the enzyme catalyzing the decarboxylation of isocitrate (ICT) into alpha-ketoglutarate. The heterodimer composed of the alpha (IDH3A) and beta (IDH3B) subunits and the heterodimer composed of the alpha (IDH3A) and gamma (IDH3G) subunits, have considerable basal activity but the full activity of the heterotetramer (containing two subunits of IDH3A, one of IDH3B and one of IDH3G) requires the assembly and cooperative function of both heterodimers. This Sus scrofa (Pig) protein is Isocitrate dehydrogenase [NAD] subunit beta, mitochondrial (IDH3B).